Consider the following 156-residue polypeptide: Ribosomal RNA large subunit methyltransferase H (156 aa).

S-adenosyl-L-methionine is bound by residues Leu73, Gly104, and 123–128 (ISSMTL).

It belongs to the RNA methyltransferase RlmH family. Homodimer.

Its subcellular location is the cytoplasm. It catalyses the reaction pseudouridine(1915) in 23S rRNA + S-adenosyl-L-methionine = N(3)-methylpseudouridine(1915) in 23S rRNA + S-adenosyl-L-homocysteine + H(+). Its function is as follows. Specifically methylates the pseudouridine at position 1915 (m3Psi1915) in 23S rRNA. The protein is Ribosomal RNA large subunit methyltransferase H of Janthinobacterium sp. (strain Marseille) (Minibacterium massiliensis).